Consider the following 205-residue polypeptide: RNA pyrophosphohydrolase (205 aa).

The 144-residue stretch at 6-149 folds into the Nudix hydrolase domain; sequence GFRPNVGIVL…KRGVYARALR (144 aa). The Nudix box motif lies at 38 to 59; it reads GGMNTDETPVEAMYRELREETG. Residues 178-205 form a disordered region; sequence GSSAAGHDRPRKRPRKRGGVLPVRINND. Basic residues predominate over residues 186 to 195; the sequence is RPRKRPRKRG.

The protein belongs to the Nudix hydrolase family. RppH subfamily. The cofactor is a divalent metal cation.

Its function is as follows. Accelerates the degradation of transcripts by removing pyrophosphate from the 5'-end of triphosphorylated RNA, leading to a more labile monophosphorylated state that can stimulate subsequent ribonuclease cleavage. In Xanthomonas campestris pv. campestris (strain 8004), this protein is RNA pyrophosphohydrolase.